Reading from the N-terminus, the 367-residue chain is DNA replication and repair protein RecF (367 aa).

Residue 30 to 37 participates in ATP binding; that stretch reads GANGSGKT.

The protein belongs to the RecF family.

Its subcellular location is the cytoplasm. Functionally, the RecF protein is involved in DNA metabolism; it is required for DNA replication and normal SOS inducibility. RecF binds preferentially to single-stranded, linear DNA. It also seems to bind ATP. The sequence is that of DNA replication and repair protein RecF from Pseudomonas putida (strain ATCC 47054 / DSM 6125 / CFBP 8728 / NCIMB 11950 / KT2440).